The primary structure comprises 471 residues: UDP-N-acetylmuramoylalanine--D-glutamate ligase (471 aa).

Gly-135 to Thr-141 contacts ATP.

This sequence belongs to the MurCDEF family.

It is found in the cytoplasm. It carries out the reaction UDP-N-acetyl-alpha-D-muramoyl-L-alanine + D-glutamate + ATP = UDP-N-acetyl-alpha-D-muramoyl-L-alanyl-D-glutamate + ADP + phosphate + H(+). It functions in the pathway cell wall biogenesis; peptidoglycan biosynthesis. Cell wall formation. Catalyzes the addition of glutamate to the nucleotide precursor UDP-N-acetylmuramoyl-L-alanine (UMA). This chain is UDP-N-acetylmuramoylalanine--D-glutamate ligase, found in Frankia casuarinae (strain DSM 45818 / CECT 9043 / HFP020203 / CcI3).